A 354-amino-acid chain; its full sequence is S-adenosylmethionine:tRNA ribosyltransferase-isomerase (354 aa).

The protein belongs to the QueA family. In terms of assembly, monomer.

It is found in the cytoplasm. The enzyme catalyses 7-aminomethyl-7-carbaguanosine(34) in tRNA + S-adenosyl-L-methionine = epoxyqueuosine(34) in tRNA + adenine + L-methionine + 2 H(+). It participates in tRNA modification; tRNA-queuosine biosynthesis. Transfers and isomerizes the ribose moiety from AdoMet to the 7-aminomethyl group of 7-deazaguanine (preQ1-tRNA) to give epoxyqueuosine (oQ-tRNA). The protein is S-adenosylmethionine:tRNA ribosyltransferase-isomerase of Klebsiella pneumoniae (strain 342).